Here is a 567-residue protein sequence, read N- to C-terminus: Thiol:disulfide interchange protein DsbD (567 aa).

A signal peptide spans 1 to 19 (MAQRIFTLILLLCSTSAFA). Intrachain disulfides connect Cys122–Cys128 and Cys185–Cys307. A run of 7 helical transmembrane segments spans residues 170-192 (ALWA…MYPL), 212-234 (LAFI…VAAA), 246-268 (YVLI…LFTL), 297-319 (GAIA…LLYI), 326-348 (WLGG…LVTV), 358-380 (GPWM…VFLL), and 387-409 (AWGL…ITSL). The 133-residue stretch at 435–567 (QDWAFGSPSA…FSAHLHDRQP (133 aa)) folds into the Thioredoxin domain. Cys482 and Cys485 form a disulfide bridge.

The protein belongs to the thioredoxin family. DsbD subfamily.

Its subcellular location is the cell inner membrane. It catalyses the reaction [protein]-dithiol + NAD(+) = [protein]-disulfide + NADH + H(+). The catalysed reaction is [protein]-dithiol + NADP(+) = [protein]-disulfide + NADPH + H(+). Its function is as follows. Required to facilitate the formation of correct disulfide bonds in some periplasmic proteins and for the assembly of the periplasmic c-type cytochromes. Acts by transferring electrons from cytoplasmic thioredoxin to the periplasm. This transfer involves a cascade of disulfide bond formation and reduction steps. The polypeptide is Thiol:disulfide interchange protein DsbD (Salmonella typhi).